Consider the following 368-residue polypeptide: Repressor ROX1 (368 aa).

A DNA-binding region (HMG box) is located at residues 10–83 (IPRPKNAFIL…EHERKYPEYK (74 aa)). 2 disordered regions span residues 100-121 (IEQQ…QPQL) and 242-273 (SSQT…SSVL). The span at 102-121 (QQQQQQQKEQQQQKQSQPQL) shows a compositional bias: low complexity.

Its subcellular location is the nucleus. In terms of biological role, transcription factor that represses the expression of HEM13, COX5B, ANB1, CYC7 or AAC3 (hypoxic function). Binds to the DNA sequence 5'-RRRTAACAAGAG-3'. The protein is Repressor ROX1 (ROX1) of Saccharomyces cerevisiae (strain ATCC 204508 / S288c) (Baker's yeast).